A 333-amino-acid chain; its full sequence is Cap-specific mRNA (nucleoside-2'-O-)-methyltransferase (333 aa).

Y22 is a binding site for mRNA. S-adenosyl-L-methionine contacts are provided by Q39, Y66, G68, G72, D95, R97, V116, and D138. The segment at 169-249 is binding to NPH-I; that stretch reads PVASSLKWRC…NKIVRNKVVI (81 aa). K175 serves as the catalytic For methyltransferase activity. Residues 177–180, D182, 205–207, and E233 contribute to the mRNA site; these read RCPF and SAE. The segment covering 305 to 320 has biased composition (basic and acidic residues); it reads SHEPIQRKISSKDSMS. A disordered region spans residues 305-333; that stretch reads SHEPIQRKISSKDSMSKNRNSKRSVRGNK. Basic residues predominate over residues 323–333; the sequence is RNSKRSVRGNK.

The protein belongs to the class I-like SAM-binding methyltransferase superfamily. Poxvirus/kinetoplastid 2'-O-MTase family. In terms of assembly, interacts with poly(A) polymerase catalytic subunit OPG063. Interacts with OPG109 and OPG123; these interactions might help linking transcription to capping and polyadenylation.

Its subcellular location is the virion. It catalyses the reaction a 5'-end (N(7)-methyl 5'-triphosphoguanosine)-ribonucleoside in mRNA + S-adenosyl-L-methionine = a 5'-end (N(7)-methyl 5'-triphosphoguanosine)-(2'-O-methyl-ribonucleoside) in mRNA + S-adenosyl-L-homocysteine + H(+). Its function is as follows. Displays methyltransferase, positive regulation of the poly(A) polymerase and transcription elongation activities. Involved in the modification of both mRNA ends and in intermediate and late gene positive transcription elongation. At the mRNAs 5' end, methylates the ribose 2' OH group of the first transcribed nucleotide, thereby producing a 2'-O-methylpurine cap. At the 3' end, functions as a processivity factor which stimulates the activity of the viral poly(A) polymerase OPG063 that creates mRNA's poly(A) tail. In the presence of OPG102, OPG063 does not dissociate from the RNA allowing tail elongation to around 250 adenylates. The protein is Cap-specific mRNA (nucleoside-2'-O-)-methyltransferase (OPG102) of Cynomys gunnisoni (Gunnison's prairie dog).